We begin with the raw amino-acid sequence, 414 residues long: Esterase FrsA (414 aa).

The protein belongs to the FrsA family.

The enzyme catalyses a carboxylic ester + H2O = an alcohol + a carboxylate + H(+). In terms of biological role, catalyzes the hydrolysis of esters. The polypeptide is Esterase FrsA (Shigella flexneri serotype 5b (strain 8401)).